A 463-amino-acid chain; its full sequence is Putative sodium-coupled neutral amino acid transporter 11 (463 aa).

The interval 1–27 (MGYPGQRPVIPPQSHRDDRETLVSEHK) is disordered. Residues 14–25 (SHRDDRETLVSE) show a composition bias toward basic and acidic residues. A run of 11 helical transmembrane segments spans residues 38-58 (AVFNVVNSIIGSGIIGLPYSM), 65-85 (LGILLLFWVSYVTDFSLILLI), 105-125 (GFPGYLLLSVLQFLYPFIAMI), 150-170 (LLIGRHLIIVLSTVVFTLPLS), 178-198 (LGKISLISTVLTTLILGIVVA), 225-245 (VGVMSFAFICHHNCFLVYGSL), 256-276 (IIHVSTLISVFISILFATCGY), 298-320 (VTFGRFCYGVTVILTYPIECFVT), 336-356 (VCHIIVTVVIITVATLVSLLI), 358-378 (CLGIVLELNGVLCAAPLIFII), and 397-417 (IMSCVMLPIGAVVMAVGFVMA). Residues Asn-437, Asn-442, and Asn-458 are each glycosylated (N-linked (GlcNAc...) asparagine).

Belongs to the amino acid/polyamine transporter 2 family.

Its subcellular location is the membrane. Putative sodium-dependent amino acid/proton antiporter. This is Putative sodium-coupled neutral amino acid transporter 11 (SLC38A11) from Bos taurus (Bovine).